A 367-amino-acid polypeptide reads, in one-letter code: 7,8-didemethyl-8-hydroxy-5-deazariboflavin synthase (367 aa).

Residues Leu39–Asn275 form the Radical SAM core domain. [4Fe-4S] cluster contacts are provided by Cys53, Cys57, and Cys60.

It belongs to the radical SAM superfamily. CofG family. Consists of two subunits, CofG and CofH. It depends on [4Fe-4S] cluster as a cofactor.

The enzyme catalyses 5-amino-5-(4-hydroxybenzyl)-6-(D-ribitylimino)-5,6-dihydrouracil + S-adenosyl-L-methionine = 7,8-didemethyl-8-hydroxy-5-deazariboflavin + 5'-deoxyadenosine + L-methionine + NH4(+) + H(+). The protein operates within cofactor biosynthesis; coenzyme F0 biosynthesis. Functionally, catalyzes the radical-mediated synthesis of 7,8-didemethyl-8-hydroxy-5-deazariboflavin from 5-amino-5-(4-hydroxybenzyl)-6-(D-ribitylimino)-5,6-dihydrouracil. The chain is 7,8-didemethyl-8-hydroxy-5-deazariboflavin synthase from Halobacterium salinarum (strain ATCC 29341 / DSM 671 / R1).